The chain runs to 369 residues: 4-hydroxyproline betaine 2-epimerase (369 aa).

Tyr-56 and Gln-162 together coordinate substrate. Catalysis depends on Lys-164, which acts as the Proton donor/acceptor. Mg(2+) is bound by residues Asp-194, Glu-219, and Asp-242. Lys-266 (proton donor/acceptor) is an active-site residue. A substrate-binding site is contributed by Ala-295.

This sequence belongs to the mandelate racemase/muconate lactonizing enzyme family. Mg(2+) serves as cofactor.

The catalysed reaction is trans-4-hydroxy-L-proline betaine = cis-4-hydroxy-D-proline betaine. It carries out the reaction L-proline betaine = D-proline betaine. Its function is as follows. Catalyzes the 2-epimerization of trans-4-hydroxy-L-proline betaine (tHyp-B) to cis-4-hydroxy-D-proline betaine (cHyp-B). Is involved in a catabolic pathway that degrades tHyp-B to alpha-ketoglutarate. This pathway would permit the utilization of tHyp-B as a carbon and nitrogen source in the absence of osmotic stress, since tHyp-B functions as an osmolyte and is not catabolized when it is needed as osmoprotectant. Can also catalyze the racemization of L-proline betaine. The sequence is that of 4-hydroxyproline betaine 2-epimerase (hpbD) from Paracoccus denitrificans (strain Pd 1222).